Here is a 267-residue protein sequence, read N- to C-terminus: RWD domain-containing protein 3 (267 aa).

An RWD domain is found at 7–114 (QELSALAAIF…LWTQQNLRHI (108 aa)). 2 interaction with UBE2I/UBC9 regions span residues 13-15 (AAI) and 100-102 (VHE).

In terms of assembly, interacts with UBE2I/UBC9, NFKBIA, HIF1A and NCOA2.

It localises to the nucleus. The protein resides in the cytoplasm. In terms of biological role, enhancer of SUMO conjugation. Via its interaction with UBE2I/UBC9, increases SUMO conjugation to proteins by promoting the binding of E1 and E2 enzymes, thioester linkage between SUMO and UBE2I/UBC9 and transfer of SUMO to specific target proteins which include HIF1A, PIAS, NFKBIA, NR3C1 and TOP1. Positively regulates the NF-kappa-B signaling pathway by enhancing the sumoylation of NF-kappa-B inhibitor alpha (NFKBIA), promoting its stabilization which consequently leads to an increased inhibition of NF-kappa-B transcriptional activity. Negatively regulates the hypoxia-inducible factor-1 alpha (HIF1A) signaling pathway by increasing the sumoylation of HIF1A, promoting its stabilization, transcriptional activity and the expression of its target gene VEGFA during hypoxia. Has no effect on ubiquitination. The chain is RWD domain-containing protein 3 (Rwdd3) from Rattus norvegicus (Rat).